The following is a 328-amino-acid chain: Transcription initiation factor IIE subunit beta (328 aa).

Positions 32 to 105 (QKKTNDTVIT…SSPSKKVRPG (74 aa)) are disordered. Ser52 bears the Phosphoserine mark. Residues 85–94 (LDDDDDDEDF) are compositionally biased toward acidic residues. Phosphoserine occurs at positions 97 and 106. The TFIIE beta DNA-binding region spans 113-187 (QANQTDISKS…FKYLSTYDVH (75 aa)).

Belongs to the TFIIE beta subunit family. In terms of assembly, TFIIE is a tetramer of two alpha (TFA1) and two beta (TFA2) subunits.

The protein resides in the nucleus. Its function is as follows. Recruits TFIIH to the initiation complex and stimulates the RNA polymerase II C-terminal domain kinase and DNA-dependent ATPase activities of TFIIH. Both TFIIH and TFIIE are required for promoter clearance by RNA polymerase. This Saccharomyces cerevisiae (strain ATCC 204508 / S288c) (Baker's yeast) protein is Transcription initiation factor IIE subunit beta (TFA2).